Here is a 348-residue protein sequence, read N- to C-terminus: GTPase Obg 1 (348 aa).

One can recognise an Obg domain in the interval 1 to 159 (MSFVDEAKIH…HCVLLKLKIV (159 aa)). Residues 160 to 329 (SDVGIIGMPN…LHAQVKKAVV (170 aa)) form the OBG-type G domain. Residues 166 to 173 (GMPNAGKS), 191 to 195 (FTTLE), 212 to 215 (DIPG), 279 to 282 (NKCD), and 310 to 312 (GDE) contribute to the GTP site. Mg(2+)-binding residues include S173 and T193.

It belongs to the TRAFAC class OBG-HflX-like GTPase superfamily. OBG GTPase family. Monomer. Mg(2+) is required as a cofactor.

The protein localises to the cytoplasm. In terms of biological role, an essential GTPase which binds GTP, GDP and possibly (p)ppGpp with moderate affinity, with high nucleotide exchange rates and a fairly low GTP hydrolysis rate. Plays a role in control of the cell cycle, stress response, ribosome biogenesis and in those bacteria that undergo differentiation, in morphogenesis control. The chain is GTPase Obg 1 from Anaplasma marginale (strain Florida).